The following is a 261-amino-acid chain: MSDILDRIIAVKREEIAAAMRSAPLEALKLEASARDLRDFVGALRAKQAAGHAAVIAEVKKASPSKGVLREHFVPADIARSYAAHGAACLSVLTDEQFFQGSVRYLEEARAACTLPVLRKDFIVDAYQILEARAMGADAILLIAAALDTPLMQDLEAYAHSLGLAVLVEVHDRDEMEQALTLKTPLLGINNRNLRTFETSIQTTLDMLDMIPPERIVVTESGILSRTDVDTMRAANVNAFLVGEAFMRADQPGEELARMFF.

Belongs to the TrpC family.

The enzyme catalyses 1-(2-carboxyphenylamino)-1-deoxy-D-ribulose 5-phosphate + H(+) = (1S,2R)-1-C-(indol-3-yl)glycerol 3-phosphate + CO2 + H2O. Its pathway is amino-acid biosynthesis; L-tryptophan biosynthesis; L-tryptophan from chorismate: step 4/5. The sequence is that of Indole-3-glycerol phosphate synthase from Burkholderia ambifaria (strain ATCC BAA-244 / DSM 16087 / CCUG 44356 / LMG 19182 / AMMD) (Burkholderia cepacia (strain AMMD)).